The sequence spans 105 residues: 5-hydroxymethyl-dUMP N-hydrolase (105 aa).

5-hydroxymethyl-dUMP is bound by residues glycine 6, isoleucine 8, serine 42, glycine 44, glutamate 48, and serine 72.

It belongs to the 2'-deoxynucleoside 5'-phosphate N-hydrolase 1 family. In terms of assembly, monomer and homodimer.

It is found in the cytoplasm. The protein resides in the nucleus. The enzyme catalyses 5-hydroxymethyl-dUMP + H2O = 5-hydroxymethyluracil + 2-deoxy-D-ribose 5-phosphate. In terms of biological role, part of a nucleotide salvage pathway that eliminates epigenetically modified 5-hydroxymethyl-dCMP (hmdCMP) in a two-step process entailing deamination to cytotoxic 5-hydroxymethyl-dUMP (hmdUMP), followed by its hydrolysis into 5-hydroxymethyluracil (hmU) and 2-deoxy-D-ribose 5-phosphate (deoxyribosephosphate). Catalyzes the second step in that pathway, the hydrolysis of the N-glycosidic bond in hmdUMP, degrading this cytotoxic nucleotide to avoid its genomic integration. This chain is 5-hydroxymethyl-dUMP N-hydrolase, found in Branchiostoma floridae (Florida lancelet).